We begin with the raw amino-acid sequence, 661 residues long: Acetyl-coenzyme A synthetase (661 aa).

Residues 199-202 and Thr317 contribute to the CoA site; that span reads RGGK. ATP contacts are provided by residues 393-395, 417-422, Asp508, and Arg523; these read GEP and DTFWQT. Residue Ser531 participates in CoA binding. Arg534 is an ATP binding site. Arg596 is a CoA binding site.

This sequence belongs to the ATP-dependent AMP-binding enzyme family.

The catalysed reaction is acetate + ATP + CoA = acetyl-CoA + AMP + diphosphate. In Coprinopsis cinerea (Inky cap fungus), this protein is Acetyl-coenzyme A synthetase (ACS-1).